The chain runs to 282 residues: Protein-export membrane protein SecF (282 aa).

Helical transmembrane passes span 16-36 (MVAL…FNTV), 126-146 (QAIW…FVAF), 148-168 (IFIP…ITAA), 169-189 (FMDV…LMLI), 221-241 (GIIM…VFSL), and 253-273 (VLII…AGLL).

It belongs to the SecD/SecF family. SecF subfamily. Part of the protein translocation apparatus. Forms a complex with SecD.

Its subcellular location is the cell membrane. In terms of biological role, involved in protein export. The polypeptide is Protein-export membrane protein SecF (Methanolacinia petrolearia (strain DSM 11571 / OCM 486 / SEBR 4847) (Methanoplanus petrolearius)).